A 175-amino-acid chain; its full sequence is Beta-carotene hydroxylase (175 aa).

The region spanning 11 to 136 (FVTVIGMEVI…RGKEGCVSFG (126 aa)) is the Fatty acid hydroxylase domain.

Belongs to the sterol desaturase family.

It carries out the reaction all-trans-beta-carotene + 4 reduced [2Fe-2S]-[ferredoxin] + 2 O2 + 4 H(+) = all-trans-zeaxanthin + 4 oxidized [2Fe-2S]-[ferredoxin] + 2 H2O. It functions in the pathway carotenoid biosynthesis; zeaxanthin biosynthesis. In terms of biological role, catalyzes the hydroxylation reaction from beta-carotene to zeaxanthin. In Pantoea ananas (Erwinia uredovora), this protein is Beta-carotene hydroxylase (crtZ).